A 600-amino-acid chain; its full sequence is Alanine--tRNA ligase (600 aa).

H463, H467, C565, and H569 together coordinate Zn(2+).

The protein belongs to the class-II aminoacyl-tRNA synthetase family. Zn(2+) is required as a cofactor.

Its subcellular location is the cytoplasm. It carries out the reaction tRNA(Ala) + L-alanine + ATP = L-alanyl-tRNA(Ala) + AMP + diphosphate. Its function is as follows. Catalyzes the attachment of alanine to tRNA(Ala) in a two-step reaction: alanine is first activated by ATP to form Ala-AMP and then transferred to the acceptor end of tRNA(Ala). Also edits incorrectly charged Ser-tRNA(Ala) and Gly-tRNA(Ala) via its editing domain. The chain is Alanine--tRNA ligase (alaS) from Treponema denticola (strain ATCC 35405 / DSM 14222 / CIP 103919 / JCM 8153 / KCTC 15104).